The sequence spans 651 residues: Acetyl-coenzyme A synthetase 1 (651 aa).

Residues 191-194, threonine 311, and asparagine 335 contribute to the CoA site; that span reads RGGK. ATP is bound by residues 387–389, 411–416, aspartate 500, and arginine 515; these read GEP and DTWWQT. Serine 523 provides a ligand contact to CoA. Arginine 526 is an ATP binding site. 3 residues coordinate Mg(2+): valine 537, histidine 539, and valine 542. Residue arginine 584 participates in CoA binding. At lysine 609 the chain carries N6-acetyllysine.

This sequence belongs to the ATP-dependent AMP-binding enzyme family. Mg(2+) serves as cofactor. Post-translationally, acetylated. Deacetylation by the SIR2-homolog deacetylase activates the enzyme.

The catalysed reaction is acetate + ATP + CoA = acetyl-CoA + AMP + diphosphate. In terms of biological role, catalyzes the conversion of acetate into acetyl-CoA (AcCoA), an essential intermediate at the junction of anabolic and catabolic pathways. AcsA undergoes a two-step reaction. In the first half reaction, AcsA combines acetate with ATP to form acetyl-adenylate (AcAMP) intermediate. In the second half reaction, it can then transfer the acetyl group from AcAMP to the sulfhydryl group of CoA, forming the product AcCoA. The polypeptide is Acetyl-coenzyme A synthetase 1 (Pseudomonas aeruginosa (strain ATCC 15692 / DSM 22644 / CIP 104116 / JCM 14847 / LMG 12228 / 1C / PRS 101 / PAO1)).